A 331-amino-acid chain; its full sequence is UPF0324 membrane protein SAS0317 (331 aa).

11 consecutive transmembrane segments (helical) span residues 9–26, 31–48, 69–88, 93–115, 122–144, 154–176, 183–202, 217–234, 247–269, 273–295, and 308–330; these read FMIG…SFLA, ILDK…AILY, LLRF…DIIG, LLAI…NKLL, ALLL…APIF, SIGI…YAIF, YGAW…LAGG, LGRV…ILIM, ISIP…VTIP, LNIL…GLNV, and LMTI…HWLY.

Belongs to the UPF0324 family.

Its subcellular location is the cell membrane. The protein is UPF0324 membrane protein SAS0317 of Staphylococcus aureus (strain MSSA476).